A 452-amino-acid polypeptide reads, in one-letter code: UDP-N-acetylmuramate--L-alanine ligase (452 aa).

121 to 127 (GTHGKTT) contributes to the ATP binding site.

This sequence belongs to the MurCDEF family.

The protein resides in the cytoplasm. The enzyme catalyses UDP-N-acetyl-alpha-D-muramate + L-alanine + ATP = UDP-N-acetyl-alpha-D-muramoyl-L-alanine + ADP + phosphate + H(+). It functions in the pathway cell wall biogenesis; peptidoglycan biosynthesis. Functionally, cell wall formation. This is UDP-N-acetylmuramate--L-alanine ligase from Christiangramia forsetii (strain DSM 17595 / CGMCC 1.15422 / KT0803) (Gramella forsetii).